Here is a 240-residue protein sequence, read N- to C-terminus: Protein MGARP (240 aa).

Topologically, residues methionine 1–asparagine 45 are cytoplasmic. Residues methionine 46–tyrosine 64 traverse the membrane as a helical; Anchor for type IV membrane protein segment. Residues lysine 65–glycine 240 are Mitochondrial intermembrane-facing. Residues alanine 72–glycine 240 form a disordered region. The segment covering lysine 73–alanine 87 has biased composition (basic and acidic residues). 2 stretches are compositionally biased toward low complexity: residues threonine 166–threonine 183 and glutamate 228–glycine 240.

Interacts with RHOT1/Miro-1, RHOT2/Miro-2, TRAK1/OIP106 and TRAK2/GRIF1.

Its subcellular location is the mitochondrion. It is found in the mitochondrion outer membrane. The protein localises to the mitochondrion inner membrane. Plays a role in the trafficking of mitochondria along microtubules. Regulates the kinesin-mediated axonal transport of mitochondria to nerve terminals along microtubules during hypoxia. Participates in the translocation of TRAK2/GRIF1 from the cytoplasm to the mitochondrion. Also plays a role in steroidogenesis through maintenance of mitochondrial abundance and morphology. Plays an inhibitory role during neocortex development by regulating mitochondrial morphology, distribution and motility in neocortical neurons. This chain is Protein MGARP (MGARP), found in Bos taurus (Bovine).